Here is a 235-residue protein sequence, read N- to C-terminus: 1-(5-phosphoribosyl)-5-[(5-phosphoribosylamino)methylideneamino] imidazole-4-carboxamide isomerase (235 aa).

D8 (proton acceptor) is an active-site residue. D127 (proton donor) is an active-site residue.

It belongs to the HisA/HisF family.

Its subcellular location is the cytoplasm. It carries out the reaction 1-(5-phospho-beta-D-ribosyl)-5-[(5-phospho-beta-D-ribosylamino)methylideneamino]imidazole-4-carboxamide = 5-[(5-phospho-1-deoxy-D-ribulos-1-ylimino)methylamino]-1-(5-phospho-beta-D-ribosyl)imidazole-4-carboxamide. It participates in amino-acid biosynthesis; L-histidine biosynthesis; L-histidine from 5-phospho-alpha-D-ribose 1-diphosphate: step 4/9. This is 1-(5-phosphoribosyl)-5-[(5-phosphoribosylamino)methylideneamino] imidazole-4-carboxamide isomerase from Aliarcobacter butzleri (strain RM4018) (Arcobacter butzleri).